Consider the following 88-residue polypeptide: Toxin RelE2 (88 aa).

This sequence belongs to the RelE toxin family.

Toxic component of a type II toxin-antitoxin (TA) system. Its toxic effect is neutralized by coexpression with cognate antitoxin RelB2 but no other ParD or RelB antitoxin. This Caulobacter vibrioides (strain ATCC 19089 / CIP 103742 / CB 15) (Caulobacter crescentus) protein is Toxin RelE2 (relE2).